The primary structure comprises 1099 residues: SLIT-ROBO Rho GTPase-activating protein 3 (1099 aa).

An F-BAR domain is found at 19–314 (AQIKEIRTQL…AVDNLDSRSD (296 aa)). The disordered stretch occupies residues 205–225 (HEDRPQRRSSVKKIEKMKEKR). A coiled-coil region spans residues 352-392 (QTELLMRYHQLQSRLATLKIENEEVRKTLDATMQTLQDMLT). The disordered stretch occupies residues 471-493 (ERAECGTTRPPCLPPKPQKMRRP). A Rho-GAP domain is found at 506–694 (GSMEAFIKDS…TIIIHHEAIF (189 aa)). The region spanning 744 to 803 (VEQIEAIAKFDYMGRSPRELSFKKGASLLLYHRASEDWWEGRHNGVDGLIPHQYIVVQDM) is the SH3 domain. Over residues 809 to 820 (DSLSQKADSEAS) the composition is skewed to polar residues. The tract at residues 809-847 (DSLSQKADSEASSGPLLDDKASSKNDLQSPTEHISDYGF) is disordered. 5 positions are modified to phosphoserine: serine 817, serine 820, serine 821, serine 837, and serine 858. Disordered regions lie at residues 861-911 (AAIP…SPEK) and 926-950 (PDKK…SSLG). A compositionally biased stretch (basic and acidic residues) spans 926-936 (PDKKALSEGHS). Over residues 937 to 947 (MRSTCGSTRHS) the composition is skewed to polar residues. The stretch at 952–987 (HKSLEAEALAEDIEKTMSTALHELRELERQNTVKQA) forms a coiled coil. Position 954 is a phosphoserine (serine 954). Residues 995–1099 (LEPLKNPPGP…NSSADKSGTM (105 aa)) are disordered. Composition is skewed to low complexity over residues 1026-1038 (RRSS…MMTT) and 1060-1074 (VRPV…SSSS). A compositionally biased stretch (polar residues) spans 1089–1099 (PNSSADKSGTM).

Homodimer. Forms a heterooligomer with SRGAP1 and SRGAP2 through its F-BAR domain. Interacts with WASF1. Probably interacts with ROBO1. Interacts with FASLG. In terms of tissue distribution, highly expressed in adult and fetal brain. Expressed at low levels in kidney. Isoform 3 is expressed in the kidney but is absent in the brain.

Functionally, GTPase-activating protein for RAC1 and perhaps Cdc42, but not for RhoA small GTPase. May attenuate RAC1 signaling in neurons. The protein is SLIT-ROBO Rho GTPase-activating protein 3 (SRGAP3) of Homo sapiens (Human).